The sequence spans 461 residues: Homogentisate 1,2-dioxygenase (461 aa).

Residues His-341, Glu-347, and His-377 each coordinate Fe cation.

This sequence belongs to the homogentisate dioxygenase family. It depends on Fe cation as a cofactor.

It catalyses the reaction homogentisate + O2 = 4-maleylacetoacetate + H(+). Its pathway is amino-acid degradation; L-phenylalanine degradation; acetoacetate and fumarate from L-phenylalanine: step 4/6. This is Homogentisate 1,2-dioxygenase (HGO) from Arabidopsis thaliana (Mouse-ear cress).